The chain runs to 470 residues: Probable citrate synthase, mitochondrial (470 aa).

Catalysis depends on residues His-297, His-351, and Asp-406.

The protein belongs to the citrate synthase family. In terms of assembly, homodimer.

Its subcellular location is the mitochondrion matrix. The enzyme catalyses oxaloacetate + acetyl-CoA + H2O = citrate + CoA + H(+). The protein operates within carbohydrate metabolism; tricarboxylic acid cycle; isocitrate from oxaloacetate: step 1/2. This is Probable citrate synthase, mitochondrial from Leishmania infantum.